Consider the following 264-residue polypeptide: S-adenosylmethionine decarboxylase proenzyme (264 aa).

The active-site Schiff-base intermediate with substrate; via pyruvic acid is serine 113. A Pyruvic acid (Ser); by autocatalysis modification is found at serine 113. The active-site Proton acceptor; for processing activity is the histidine 118. The active-site Proton donor; for catalytic activity is cysteine 141.

Belongs to the prokaryotic AdoMetDC family. Type 2 subfamily. As to quaternary structure, heterooctamer of four alpha and four beta chains arranged as a tetramer of alpha/beta heterodimers. Requires pyruvate as cofactor. Is synthesized initially as an inactive proenzyme. Formation of the active enzyme involves a self-maturation process in which the active site pyruvoyl group is generated from an internal serine residue via an autocatalytic post-translational modification. Two non-identical subunits are generated from the proenzyme in this reaction, and the pyruvate is formed at the N-terminus of the alpha chain, which is derived from the carboxyl end of the proenzyme. The post-translation cleavage follows an unusual pathway, termed non-hydrolytic serinolysis, in which the side chain hydroxyl group of the serine supplies its oxygen atom to form the C-terminus of the beta chain, while the remainder of the serine residue undergoes an oxidative deamination to produce ammonia and the pyruvoyl group blocking the N-terminus of the alpha chain.

It catalyses the reaction S-adenosyl-L-methionine + H(+) = S-adenosyl 3-(methylsulfanyl)propylamine + CO2. Its pathway is amine and polyamine biosynthesis; S-adenosylmethioninamine biosynthesis; S-adenosylmethioninamine from S-adenosyl-L-methionine: step 1/1. Catalyzes the decarboxylation of S-adenosylmethionine to S-adenosylmethioninamine (dcAdoMet), the propylamine donor required for the synthesis of the polyamines spermine and spermidine from the diamine putrescine. The chain is S-adenosylmethionine decarboxylase proenzyme from Xylella fastidiosa (strain 9a5c).